Reading from the N-terminus, the 305-residue chain is Probable aspartoacylase (305 aa).

2 residues coordinate Zn(2+): His13 and Glu16. Residues Arg55 and 62 to 63 (NR) contribute to the substrate site. Position 105 (His105) interacts with Zn(2+). Positions 163 and 273 each coordinate substrate.

Belongs to the AspA/AstE family. Aspartoacylase subfamily. Requires Zn(2+) as cofactor.

It carries out the reaction an N-acyl-L-aspartate + H2O = a carboxylate + L-aspartate. In Prochlorococcus marinus (strain NATL1A), this protein is Probable aspartoacylase.